Consider the following 54-residue polypeptide: Small ribosomal subunit protein uS14 (54 aa).

Residues cysteine 19, cysteine 22, cysteine 37, and cysteine 40 each coordinate Zn(2+).

Belongs to the universal ribosomal protein uS14 family. Zinc-binding uS14 subfamily. In terms of assembly, part of the 30S ribosomal subunit. Zn(2+) is required as a cofactor.

Its function is as follows. Binds 16S rRNA, required for the assembly of 30S particles. This chain is Small ribosomal subunit protein uS14, found in Sulfolobus acidocaldarius (strain ATCC 33909 / DSM 639 / JCM 8929 / NBRC 15157 / NCIMB 11770).